The chain runs to 366 residues: Chorismate synthase (366 aa).

Positions 48 and 54 each coordinate NADP(+). FMN is bound by residues 125-127, 238-239, Gly-278, 293-297, and Arg-319; these read RSS, NA, and KPTSS.

The protein belongs to the chorismate synthase family. In terms of assembly, homotetramer. Requires FMNH2 as cofactor.

It carries out the reaction 5-O-(1-carboxyvinyl)-3-phosphoshikimate = chorismate + phosphate. It functions in the pathway metabolic intermediate biosynthesis; chorismate biosynthesis; chorismate from D-erythrose 4-phosphate and phosphoenolpyruvate: step 7/7. Its function is as follows. Catalyzes the anti-1,4-elimination of the C-3 phosphate and the C-6 proR hydrogen from 5-enolpyruvylshikimate-3-phosphate (EPSP) to yield chorismate, which is the branch point compound that serves as the starting substrate for the three terminal pathways of aromatic amino acid biosynthesis. This reaction introduces a second double bond into the aromatic ring system. The protein is Chorismate synthase of Neisseria gonorrhoeae (strain NCCP11945).